Consider the following 469-residue polypeptide: Glutamine synthetase (469 aa).

The region spanning 12-97 (HDVKWVDLRF…LVCDIIEPST (86 aa)) is the GS beta-grasp domain. The GS catalytic domain occupies 105–469 (PRNIAKRAEE…PLEYDLYYSV (365 aa)). Residues glutamate 130 and glutamate 132 each coordinate Mg(2+). Glutamate 208 provides a ligand contact to ATP. Mg(2+)-binding residues include glutamate 213 and glutamate 221. Residues 265 to 266 (NG) and glycine 266 contribute to the L-glutamate site. Mg(2+) is bound at residue histidine 270. ATP is bound by residues 272–274 (HMS) and serine 274. Arginine 322, glutamate 328, and arginine 340 together coordinate L-glutamate. Arginine 340, arginine 345, and lysine 353 together coordinate ATP. Position 358 (glutamate 358) interacts with Mg(2+). Residue arginine 360 participates in L-glutamate binding. Tyrosine 398 carries the O-AMP-tyrosine modification.

Belongs to the glutamine synthetase family. As to quaternary structure, oligomer of 12 subunits arranged in the form of two hexameric ring. Mg(2+) serves as cofactor.

It is found in the cytoplasm. The enzyme catalyses L-glutamate + NH4(+) + ATP = L-glutamine + ADP + phosphate + H(+). Its activity is regulated as follows. The activity of this enzyme could be controlled by adenylation under conditions of abundant glutamine. Functionally, catalyzes the ATP-dependent biosynthesis of glutamine from glutamate and ammonia. The protein is Glutamine synthetase of Pseudomonas aeruginosa (strain ATCC 15692 / DSM 22644 / CIP 104116 / JCM 14847 / LMG 12228 / 1C / PRS 101 / PAO1).